Consider the following 798-residue polypeptide: uncharacterized protein (798 aa).

An N-terminal signal peptide occupies residues 1-22; the sequence is MKFKYGAIVFSGLLGVSAILAA. Cys-23 carries the N-palmitoyl cysteine lipid modification. Residue Cys-23 is the site of S-diacylglycerol cysteine attachment. Basic and acidic residues predominate over residues 178–192; that stretch reads SKGAQKDNKSAEVQR. Disordered regions lie at residues 178–204, 226–260, 443–463, and 478–515; these read SKGA…TQPL, NGKK…ATSD, EVNA…QSDQ, and SDIK…TPKK. A compositionally biased stretch (polar residues) spans 193-204; sequence KSTGQKTVTQPL. Residues 226 to 235 are compositionally biased toward basic and acidic residues; that stretch reads NGKKKEEKKS. The span at 478 to 495 shows a compositional bias: basic and acidic residues; the sequence is SDIKVKPKTQAESKKSSD. Polar residues predominate over residues 496–515; that stretch reads SKQTANTGKGSNSKQQTPKK.

This sequence belongs to the MG185/MG260 family.

It localises to the cell membrane. This is an uncharacterized protein from Mycoplasma pneumoniae (strain ATCC 29342 / M129 / Subtype 1) (Mycoplasmoides pneumoniae).